A 61-amino-acid chain; its full sequence is Protein stunted (61 aa).

The tract at residues Ala-3 to Ser-15 is sufficient for mth activation.

This sequence belongs to the eukaryotic ATPase epsilon family.

Activates the G-protein coupled receptor mth in vitro, leading to increased intracellular calcium ion levels. In Drosophila melanogaster (Fruit fly), this protein is Protein stunted.